We begin with the raw amino-acid sequence, 550 residues long: Glucose-6-phosphate isomerase 1 (550 aa).

Catalysis depends on Glu353, which acts as the Proton donor. Catalysis depends on residues His384 and Lys512.

This sequence belongs to the GPI family.

The protein localises to the cytoplasm. It catalyses the reaction alpha-D-glucose 6-phosphate = beta-D-fructose 6-phosphate. Its pathway is carbohydrate biosynthesis; gluconeogenesis. It functions in the pathway carbohydrate degradation; glycolysis; D-glyceraldehyde 3-phosphate and glycerone phosphate from D-glucose: step 2/4. Catalyzes the reversible isomerization of glucose-6-phosphate to fructose-6-phosphate. This chain is Glucose-6-phosphate isomerase 1, found in Thiobacillus denitrificans (strain ATCC 25259 / T1).